The primary structure comprises 318 residues: Ribose-phosphate pyrophosphokinase 2 (318 aa).

Position 96–101 (96–101 (RQDKKD)) interacts with ATP. 4 residues coordinate Mg(2+): Asp128, His130, Asp139, and Asp143. Position 130 (His130) interacts with ATP. A binding of phosphoribosylpyrophosphate region spans residues 212-227 (KDRVAILVDDMADTCG).

Belongs to the ribose-phosphate pyrophosphokinase family. As to quaternary structure, homodimer. The active form is probably a hexamer composed of 3 homodimers. The cofactor is Mg(2+).

It catalyses the reaction D-ribose 5-phosphate + ATP = 5-phospho-alpha-D-ribose 1-diphosphate + AMP + H(+). Its pathway is metabolic intermediate biosynthesis; 5-phospho-alpha-D-ribose 1-diphosphate biosynthesis; 5-phospho-alpha-D-ribose 1-diphosphate from D-ribose 5-phosphate (route I): step 1/1. Activated by magnesium and inorganic phosphate. Competitively or non-competitively inhibited by ADP, 2,3-bisphosphoglyceride or GDP. In terms of biological role, catalyzes the synthesis of phosphoribosylpyrophosphate (PRPP) that is essential for nucleotide synthesis. The chain is Ribose-phosphate pyrophosphokinase 2 (PRPS2) from Homo sapiens (Human).